A 460-amino-acid polypeptide reads, in one-letter code: Fumarate hydratase class II (460 aa).

Substrate contacts are provided by residues Ser-95–Thr-97, His-126–Asp-129, Ser-136–Asn-138, and Thr-184. His-185 acts as the Proton donor/acceptor in catalysis. Residue Ser-315 is part of the active site. Residues Ser-316 and Lys-321–Asn-323 each bind substrate.

The protein belongs to the class-II fumarase/aspartase family. Fumarase subfamily. As to quaternary structure, homotetramer.

Its subcellular location is the cytoplasm. The enzyme catalyses (S)-malate = fumarate + H2O. It functions in the pathway carbohydrate metabolism; tricarboxylic acid cycle; (S)-malate from fumarate: step 1/1. Functionally, involved in the TCA cycle. Catalyzes the stereospecific interconversion of fumarate to L-malate. The chain is Fumarate hydratase class II from Chlamydia pneumoniae (Chlamydophila pneumoniae).